A 172-amino-acid chain; its full sequence is Putative acetyltransferase YvoF (172 aa).

Belongs to the transferase hexapeptide repeat family.

This chain is Putative acetyltransferase YvoF (yvoF), found in Bacillus subtilis (strain 168).